The sequence spans 141 residues: Large ribosomal subunit protein uL13 (141 aa).

Belongs to the universal ribosomal protein uL13 family. Part of the 50S ribosomal subunit.

Functionally, this protein is one of the early assembly proteins of the 50S ribosomal subunit, although it is not seen to bind rRNA by itself. It is important during the early stages of 50S assembly. This is Large ribosomal subunit protein uL13 from Helicobacter pylori (strain Shi470).